A 530-amino-acid chain; its full sequence is uncharacterized protein (530 aa).

This is an uncharacterized protein from Acanthamoeba polyphaga (Amoeba).